A 190-amino-acid polypeptide reads, in one-letter code: Protein GrpE (190 aa).

Residues 1–31 (MTETPNTSSEEIQTSEPSSDNELQTLQQENA) are compositionally biased toward polar residues. The segment at 1–34 (MTETPNTSSEEIQTSEPSSDNELQTLQQENANLK) is disordered.

It belongs to the GrpE family. As to quaternary structure, homodimer.

It is found in the cytoplasm. Functionally, participates actively in the response to hyperosmotic and heat shock by preventing the aggregation of stress-denatured proteins, in association with DnaK and GrpE. It is the nucleotide exchange factor for DnaK and may function as a thermosensor. Unfolded proteins bind initially to DnaJ; upon interaction with the DnaJ-bound protein, DnaK hydrolyzes its bound ATP, resulting in the formation of a stable complex. GrpE releases ADP from DnaK; ATP binding to DnaK triggers the release of the substrate protein, thus completing the reaction cycle. Several rounds of ATP-dependent interactions between DnaJ, DnaK and GrpE are required for fully efficient folding. This Chlamydia muridarum (strain MoPn / Nigg) protein is Protein GrpE.